A 214-amino-acid polypeptide reads, in one-letter code: MELYLDTANVDEIKEIASYGLVDGVTTNPSLIAKSGRSFKEVIKEICSIVSGPVSAEVLSTKFDGMMKEALELVEIAENVVIKVPLIPEGLKTVVELTKRNIPTNVTLCFSAPQALLAAKAGATFISPFIGRVDDTSWDGMELISEIREIYDNYGYDTRILAASIRGPIHLKESALRGADCATMPHSAFLQLFKHPLTDIGLEKFLEDSKKLKW.

Catalysis depends on lysine 83, which acts as the Schiff-base intermediate with substrate.

The protein belongs to the transaldolase family. Type 3B subfamily.

Its subcellular location is the cytoplasm. The enzyme catalyses D-sedoheptulose 7-phosphate + D-glyceraldehyde 3-phosphate = D-erythrose 4-phosphate + beta-D-fructose 6-phosphate. Its pathway is carbohydrate degradation; pentose phosphate pathway; D-glyceraldehyde 3-phosphate and beta-D-fructose 6-phosphate from D-ribose 5-phosphate and D-xylulose 5-phosphate (non-oxidative stage): step 2/3. Transaldolase is important for the balance of metabolites in the pentose-phosphate pathway. The chain is Probable transaldolase from Leptospira interrogans serogroup Icterohaemorrhagiae serovar copenhageni (strain Fiocruz L1-130).